The following is a 669-amino-acid chain: Glycine--tRNA ligase beta subunit (669 aa).

The protein belongs to the class-II aminoacyl-tRNA synthetase family. Tetramer of two alpha and two beta subunits.

The protein resides in the cytoplasm. The enzyme catalyses tRNA(Gly) + glycine + ATP = glycyl-tRNA(Gly) + AMP + diphosphate. In Phenylobacterium zucineum (strain HLK1), this protein is Glycine--tRNA ligase beta subunit.